The chain runs to 505 residues: Pleckstrin homology domain-containing family D member 1 (505 aa).

A PH domain is found at 28–136 (KVQLYGVLWK…WLEMLQESGK (109 aa)). Residues 146–391 (EAMIKSLEAQ…KVRNKEKEER (246 aa)) are a coiled coil. Residues 264-284 (DKNQPQPLTNQSEQPPATDGL) are disordered. The segment covering 267–278 (QPQPLTNQSEQP) has biased composition (polar residues). Position 502 is an omega-N-methylarginine (Arg-502).

The protein belongs to the PLEKHD1 family.

The chain is Pleckstrin homology domain-containing family D member 1 (Plekhd1) from Rattus norvegicus (Rat).